The following is a 161-amino-acid chain: FAD synthase (161 aa).

ATP contacts are provided by residues 19-20 (TF), 24-27 (HPGH), Asp-106, and Tyr-133.

Belongs to the archaeal FAD synthase family. As to quaternary structure, homodimer. Requires a divalent metal cation as cofactor.

It catalyses the reaction FMN + ATP + H(+) = FAD + diphosphate. Its pathway is cofactor biosynthesis; FAD biosynthesis; FAD from FMN: step 1/1. Catalyzes the transfer of the AMP portion of ATP to flavin mononucleotide (FMN) to produce flavin adenine dinucleotide (FAD) coenzyme. The chain is FAD synthase from Methanothermobacter marburgensis (strain ATCC BAA-927 / DSM 2133 / JCM 14651 / NBRC 100331 / OCM 82 / Marburg) (Methanobacterium thermoautotrophicum).